The primary structure comprises 188 residues: Translation machinery-associated protein 22 (188 aa).

The SUI1 domain occupies 96–167 (VVIKRIERSK…GVEELITQML (72 aa)).

It belongs to the DENR family. In terms of assembly, interacts with the 40S ribosomal subunit.

It localises to the cytoplasm. The sequence is that of Translation machinery-associated protein 22 (TMA22) from Yarrowia lipolytica (strain CLIB 122 / E 150) (Yeast).